Consider the following 20-residue polypeptide: Phenol-soluble modulin alpha 4 peptide (20 aa).

Belongs to the phenol-soluble modulin alpha peptides family.

Its function is as follows. Peptide which can recruit, activate and subsequently lyse neutrophils, thus eliminating the main cellular defense against infection. This chain is Phenol-soluble modulin alpha 4 peptide (psmA4), found in Staphylococcus aureus (strain bovine RF122 / ET3-1).